The primary structure comprises 378 residues: UPF0754 membrane protein BC_0879 (378 aa).

A helical transmembrane segment spans residues 357 to 377 (YLGALLGGMIGLVQGLLLLFL).

The protein belongs to the UPF0754 family.

The protein localises to the cell membrane. This Bacillus cereus (strain ATCC 14579 / DSM 31 / CCUG 7414 / JCM 2152 / NBRC 15305 / NCIMB 9373 / NCTC 2599 / NRRL B-3711) protein is UPF0754 membrane protein BC_0879.